Here is a 491-residue protein sequence, read N- to C-terminus: Serine/threonine-protein kinase 3 (491 aa).

At Met1 the chain carries N-acetylmethionine. Ser15 is modified (phosphoserine; by PLK1). The region spanning 27 to 278 is the Protein kinase domain; that stretch reads FDVLEKLGEG…ATQLLQHPFI (252 aa). ATP is bound by residues 33 to 41 and Lys56; that span reads LGEGSYGSV. Residue Thr117 is modified to Phosphothreonine; by PKB/AKT1. Asp146 acts as the Proton acceptor in catalysis. The Mg(2+) site is built by Asn151 and Asp164. Phosphothreonine; by autocatalysis occurs at positions 174 and 180. Residues 287–328 adopt a coiled-coil conformation; that stretch reads LRDLITEAMEIKAKRHEEQQRELEEEEENSDEDELDSHTMVK. Residues 301 to 327 form a disordered region; it reads RHEEQQRELEEEEENSDEDELDSHTMV. The segment covering 309–321 has biased composition (acidic residues); sequence LEEEEENSDEDEL. Ser316 carries the phosphoserine modification. A phosphothreonine; by autocatalysis mark is found at Thr336 and Thr378. The tract at residues 370–392 is disordered; that stretch reads EDEEEEDGTMKRNATSPQVQRPS. The span at 381-390 shows a compositional bias: polar residues; sequence RNATSPQVQR. Residue Thr384 is modified to Phosphothreonine; by PKB/AKT1. 2 positions are modified to phosphoserine: Ser385 and Ser444. Residues 437–484 form the SARAH domain; that stretch reads FDFLKNLSLEELQMRLKALDPMMEREIEELRQRYTAKRQPILDAMDAK. Positions 442-475 form a coiled coil; the sequence is NLSLEELQMRLKALDPMMEREIEELRQRYTAKRQ.

This sequence belongs to the protein kinase superfamily. STE Ser/Thr protein kinase family. STE20 subfamily. Homodimer; mediated via the coiled-coil region. Interacts with NORE1, which inhibits autoactivation. Interacts with and stabilizes SAV1. Interacts with RAF1, which prevents dimerization and phosphorylation. Interacts with RASSF1. Interacts (via SARAH domain) with isoform 1 of NEK2. Interacts with ESR1 only in the presence of SAV1. Interacts with PKB/AKT1. Forms a tripartite complex with MOBKL1B and STK38. Interacts with RASSF2 (via SARAH domain). Interacts with DLG5 (via PDZ domain 3). Interacts with LATS1; this interaction is inhibited in the presence of DLG5. Interacts with MARK3 in the presence of DLG5. Interacts with RASSF5; this interaction inhibits STK3 autoactivation through heterodimerization. Interacts (when phosphorylated) with SLMAP (via FHA domain); the interaction associates STK3 with the STRIPAK complex. Mg(2+) is required as a cofactor. Post-translationally, autophosphorylated on two residues Thr-174 and Thr-180, leading to activation. Phosphorylation at Thr-117 and Thr-384 by PKB/AKT1, leads to inhibition of its: cleavage, kinase activity, autophosphorylation at Thr-180, binding to RASSF1 and nuclear translocation, and increase in its binding to RAF1. Phosphorylated at Ser-15 by PLK1, leading to activation. When autophosphorylated at Thr-180, recruits STRIPAK complex and promotes PP2A-mediated dephosphorylation and inactivation of STK3. In terms of processing, proteolytically cleaved by caspase-3 during apoptosis. Proteolytic cleavage results in kinase activation and nuclear translocation of the truncated form (MST1/N). Ubiquitinated by TRIM69; leading to its redistribution to the perinuclear cytoskeleton, where it is phosphorylated by PLK1 and subsequently activated. Expressed at high levels in adult kidney, skeletal and placenta tissues and at very low levels in adult heart, lung and brain tissues.

The protein resides in the cytoplasm. It is found in the nucleus. It localises to the cytoskeleton. Its subcellular location is the microtubule organizing center. The protein localises to the centrosome. It catalyses the reaction L-seryl-[protein] + ATP = O-phospho-L-seryl-[protein] + ADP + H(+). The enzyme catalyses L-threonyl-[protein] + ATP = O-phospho-L-threonyl-[protein] + ADP + H(+). Inhibited by the C-terminal non-catalytic region. Activated by caspase-cleavage. Full activation also requires homodimerization and autophosphorylation of Thr-180, which are inhibited by the proto-oncogene product RAF1. Activated by RASSF1 which acts by preventing its dephosphorylation. When autophosphorylated at Thr-180, recruits STRIPAK complex and promotes PP2A-mediated dephosphorylation and inactivation of STK3. Functionally, stress-activated, pro-apoptotic kinase which, following caspase-cleavage, enters the nucleus and induces chromatin condensation followed by internucleosomal DNA fragmentation. Key component of the Hippo signaling pathway which plays a pivotal role in organ size control and tumor suppression by restricting proliferation and promoting apoptosis. The core of this pathway is composed of a kinase cascade wherein STK3/MST2 and STK4/MST1, in complex with its regulatory protein SAV1, phosphorylates and activates LATS1/2 in complex with its regulatory protein MOB1, which in turn phosphorylates and inactivates YAP1 oncoprotein and WWTR1/TAZ. Phosphorylation of YAP1 by LATS2 inhibits its translocation into the nucleus to regulate cellular genes important for cell proliferation, cell death, and cell migration. STK3/MST2 and STK4/MST1 are required to repress proliferation of mature hepatocytes, to prevent activation of facultative adult liver stem cells (oval cells), and to inhibit tumor formation. Phosphorylates NKX2-1. Phosphorylates NEK2 and plays a role in centrosome disjunction by regulating the localization of NEK2 to centrosome, and its ability to phosphorylate CROCC and CEP250. In conjunction with SAV1, activates the transcriptional activity of ESR1 through the modulation of its phosphorylation. Positively regulates RAF1 activation via suppression of the inhibitory phosphorylation of RAF1 on 'Ser-259'. Phosphorylates MOBKL1A and RASSF2. Phosphorylates MOBKL1B on 'Thr-74'. Acts cooperatively with MOBKL1B to activate STK38. The sequence is that of Serine/threonine-protein kinase 3 from Homo sapiens (Human).